Here is a 183-residue protein sequence, read N- to C-terminus: Endoribonuclease YbeY (183 aa).

Residues His-140, His-144, and His-150 each coordinate Zn(2+).

This sequence belongs to the endoribonuclease YbeY family. Zn(2+) serves as cofactor.

It is found in the cytoplasm. Functionally, single strand-specific metallo-endoribonuclease involved in late-stage 70S ribosome quality control and in maturation of the 3' terminus of the 16S rRNA. The sequence is that of Endoribonuclease YbeY from Bradyrhizobium diazoefficiens (strain JCM 10833 / BCRC 13528 / IAM 13628 / NBRC 14792 / USDA 110).